Here is a 258-residue protein sequence, read N- to C-terminus: Octanoyltransferase (258 aa).

The 185-residue stretch at 42-226 (NVGTDTLLLL…AVVAALDGEL (185 aa)) folds into the BPL/LPL catalytic domain. Substrate-binding positions include 80–87 (RGGKITWH), 156–158 (AIG), and 169–171 (GFS). The active-site Acyl-thioester intermediate is cysteine 187.

This sequence belongs to the LipB family.

The protein localises to the cytoplasm. It catalyses the reaction octanoyl-[ACP] + L-lysyl-[protein] = N(6)-octanoyl-L-lysyl-[protein] + holo-[ACP] + H(+). Its pathway is protein modification; protein lipoylation via endogenous pathway; protein N(6)-(lipoyl)lysine from octanoyl-[acyl-carrier-protein]: step 1/2. Catalyzes the transfer of endogenously produced octanoic acid from octanoyl-acyl-carrier-protein onto the lipoyl domains of lipoate-dependent enzymes. Lipoyl-ACP can also act as a substrate although octanoyl-ACP is likely to be the physiological substrate. This is Octanoyltransferase from Rhodococcus jostii (strain RHA1).